A 369-amino-acid chain; its full sequence is Cobalt-precorrin-5B C(1)-methyltransferase (369 aa).

Belongs to the CbiD family.

It catalyses the reaction Co-precorrin-5B + S-adenosyl-L-methionine = Co-precorrin-6A + S-adenosyl-L-homocysteine. The protein operates within cofactor biosynthesis; adenosylcobalamin biosynthesis; cob(II)yrinate a,c-diamide from sirohydrochlorin (anaerobic route): step 6/10. In terms of biological role, catalyzes the methylation of C-1 in cobalt-precorrin-5B to form cobalt-precorrin-6A. The sequence is that of Cobalt-precorrin-5B C(1)-methyltransferase from Methanococcus vannielii (strain ATCC 35089 / DSM 1224 / JCM 13029 / OCM 148 / SB).